We begin with the raw amino-acid sequence, 281 residues long: MKNFFSMHAILLACSAGAGLAAITQGISEGTYSRIVEMATISQAAYANLCNIPPAITSAGKIYNAETDINGWVLRDDSRQEIITVFRGTGSDTNLQLDTNYTQAPFDTLPQCSGCAVHGGYYVGWVSVKDQVEGLIHQQASQYPDYSLVVTGHSLGASMAAITAAQLSATYNNITVYTFGEPRTGNQAYASYVDETFQATNPDATKFYRVTHTNDGIPNLPPTSQGYVHHGTEYWSVEPHGPQNMYLCLGDEVQCCEAQGGQGVNDAHVTYFGMASGACTW.

Residues 1–21 (MKNFFSMHAILLACSAGAGLA) form the signal peptide. Disulfide bonds link C50–C279, C112–C115, and C248–C255. Position 98 (D98) interacts with substrate. N100 carries an N-linked (GlcNAc...) asparagine glycan. Y101 lines the substrate pocket. S154 (nucleophile) is an active-site residue. N173 is a glycosylation site (N-linked (GlcNAc...) asparagine). The active-site Charge relay system is the D215. Residue H268 participates in substrate binding. The active-site Charge relay system is the H268.

Belongs to the AB hydrolase superfamily. FaeA family.

Its subcellular location is the secreted. The catalysed reaction is feruloyl-polysaccharide + H2O = ferulate + polysaccharide.. In terms of biological role, involved in degradation of plant cell walls. Hydrolyzes the feruloyl-arabinose ester bond in arabinoxylans, and the feruloyl-galactose ester bond in pectin. The polypeptide is Probable feruloyl esterase A (faeA) (Aspergillus oryzae (strain ATCC 42149 / RIB 40) (Yellow koji mold)).